Consider the following 410-residue polypeptide: WD repeat and FYVE domain-containing protein 1 (410 aa).

WD repeat units lie at residues 22 to 61, 66 to 105, 112 to 150, 153 to 192, 197 to 236, and 240 to 279; these read GHQDAVTAALLIPKEDGVITASEDRTIRVWLKRDSGQYWP, TMASPCSAMAYHHDSRRIFVGQDNGAVMEFHVSEDFNKMN, AHQNRVSAIIFSLAAEWVISTGHDKCVSWMCTRSGNMLG, FFSSWASCLQYDLDTQHAFVGDYSGQITLLKLEQNTCSVI, GHEGSIACLWWDPIQRLLFSGASDNSVIMWDIGGRKGRTL, and GHHDRVQSLCYLQLTRQLVSCSADGGIAVWNMDVSREEAP. An FYVE-type zinc finger spans residues 281-352; that stretch reads WLESDSCQKC…VCDSCYDSIK (72 aa). Zn(2+) contacts are provided by Cys-287, Cys-290, Cys-314, Cys-317, Cys-322, Cys-325, Cys-344, and Cys-347. The WD 7 repeat unit spans residues 364 to 403; sequence EGKHNISHMSMDIARGLMVTCGTDRVVKIWDMTPVVGCSL. A Phosphoserine modification is found at Ser-408.

Binds PtdIns3P in vitro with high specificity over other phosphoinositides. Interacts (via WD repeat 2) with tyrosine-phosphorylated TLR3 (via TIR domain) in response to poly(I:C). Interacts with TLR4 in response to LPS. Interacts with TICAM1 in response to poly(I:C).

The protein localises to the early endosome. In terms of biological role, positively regulates TLR3- and TLR4-mediated signaling pathways by bridging the interaction between TLR3 or TLR4 and TICAM1. Promotes TLR3/4 ligand-induced activation of transcription factors IRF3 and NF-kappa-B, as well as the production of IFN-beta and inflammatory cytokines. This is WD repeat and FYVE domain-containing protein 1 (Wdfy1) from Mus musculus (Mouse).